The primary structure comprises 285 residues: Golgi phosphoprotein 3-like (285 aa).

Residues 1–43 (MTTLTHRTRRTEVSKSSEKKIESEEDTNQERSPDNEDPGDSKD) form a disordered region. Residues 10-43 (RTEVSKSSEKKIESEEDTNQERSPDNEDPGDSKD) show a composition bias toward basic and acidic residues. 2 residues coordinate a 1,2-diacyl-sn-glycero-3-phospho-(1D-myo-inositol 4-phosphate): Trp-67 and Arg-76. Ser-112 carries the post-translational modification Phosphoserine. Residues Arg-157 and Arg-160 each coordinate a 1,2-diacyl-sn-glycero-3-phospho-(1D-myo-inositol 4-phosphate). A beta-hairpin required for oligomerization region spans residues 176 to 187 (EKQNFLLFDMTT).

It belongs to the GOLPH3/VPS74 family. In terms of assembly, homooligomer. Does not interact MYO18; differs from GOLPH3 by its inability to interact with MYO18. May interact with ARF1. Expressed in a subset of tissues tested with higher expression in salivary gland, small intestine and skin (at protein level).

It localises to the golgi apparatus. Its subcellular location is the golgi stack membrane. The protein resides in the trans-Golgi network membrane. Phosphatidylinositol-4-phosphate-binding protein that may antagonize the action of GOLPH3 which is required for the process of vesicle budding at the Golgi and anterograde transport to the plasma membrane. This Mus musculus (Mouse) protein is Golgi phosphoprotein 3-like (Golph3l).